Reading from the N-terminus, the 277-residue chain is uncharacterized protein (277 aa).

Residue 32 to 39 participates in ATP binding; it reads GPQGSGKS.

It belongs to the GLYK kinase family.

The protein resides in the cytoplasm. It localises to the nucleus. Its function is as follows. Has a role in meiosis. This is an uncharacterized protein from Schizosaccharomyces pombe (strain 972 / ATCC 24843) (Fission yeast).